A 361-amino-acid polypeptide reads, in one-letter code: UDP-N-acetylglucosamine--N-acetylmuramyl-(pentapeptide) pyrophosphoryl-undecaprenol N-acetylglucosamine transferase (361 aa).

Residues S199 and Q290 each coordinate UDP-N-acetyl-alpha-D-glucosamine.

Belongs to the glycosyltransferase 28 family. MurG subfamily.

The protein localises to the cell membrane. It catalyses the reaction Mur2Ac(oyl-L-Ala-gamma-D-Glu-L-Lys-D-Ala-D-Ala)-di-trans,octa-cis-undecaprenyl diphosphate + UDP-N-acetyl-alpha-D-glucosamine = beta-D-GlcNAc-(1-&gt;4)-Mur2Ac(oyl-L-Ala-gamma-D-Glu-L-Lys-D-Ala-D-Ala)-di-trans,octa-cis-undecaprenyl diphosphate + UDP + H(+). It functions in the pathway cell wall biogenesis; peptidoglycan biosynthesis. In terms of biological role, cell wall formation. Catalyzes the transfer of a GlcNAc subunit on undecaprenyl-pyrophosphoryl-MurNAc-pentapeptide (lipid intermediate I) to form undecaprenyl-pyrophosphoryl-MurNAc-(pentapeptide)GlcNAc (lipid intermediate II). In Streptococcus mutans serotype c (strain ATCC 700610 / UA159), this protein is UDP-N-acetylglucosamine--N-acetylmuramyl-(pentapeptide) pyrophosphoryl-undecaprenol N-acetylglucosamine transferase.